Here is a 347-residue protein sequence, read N- to C-terminus: UPF0284 protein M1627_0030 (347 aa).

The protein belongs to the UPF0284 family.

The chain is UPF0284 protein M1627_0030 from Saccharolobus islandicus (strain M.16.27) (Sulfolobus islandicus).